We begin with the raw amino-acid sequence, 71 residues long: Large ribosomal subunit protein eL38 (71 aa).

The protein belongs to the eukaryotic ribosomal protein eL38 family.

This Argas monolakensis (Mono lake bird tick) protein is Large ribosomal subunit protein eL38 (RpL38).